A 352-amino-acid polypeptide reads, in one-letter code: Protein RecA (352 aa).

Residue 65–72 (GPESSGKT) coordinates ATP. The segment at 333–352 (VKAAANREPVEEVEEADTDI) is disordered. A compositionally biased stretch (acidic residues) spans 343–352 (EEVEEADTDI).

Belongs to the RecA family.

The protein resides in the cytoplasm. In terms of biological role, can catalyze the hydrolysis of ATP in the presence of single-stranded DNA, the ATP-dependent uptake of single-stranded DNA by duplex DNA, and the ATP-dependent hybridization of homologous single-stranded DNAs. It interacts with LexA causing its activation and leading to its autocatalytic cleavage. The polypeptide is Protein RecA (Pseudomonas fluorescens).